We begin with the raw amino-acid sequence, 360 residues long: Nodulin-44 (360 aa).

Positions 1-23 are cleaved as a signal peptide; the sequence is MEEKILMRVIVITVFLFIGAATA. 2 disordered regions span residues 123–148 and 228–249; these read FSPR…VIPL and FSPR…TLGR.

It belongs to the nodulin 20 family.

The chain is Nodulin-44 from Glycine max (Soybean).